The primary structure comprises 259 residues: Ribosomal RNA small subunit methyltransferase A (259 aa).

The S-adenosyl-L-methionine site is built by Asn-13, Leu-15, Gly-40, Glu-61, Asp-85, and Asn-103.

It belongs to the class I-like SAM-binding methyltransferase superfamily. rRNA adenine N(6)-methyltransferase family. RsmA subfamily.

It localises to the cytoplasm. The enzyme catalyses adenosine(1518)/adenosine(1519) in 16S rRNA + 4 S-adenosyl-L-methionine = N(6)-dimethyladenosine(1518)/N(6)-dimethyladenosine(1519) in 16S rRNA + 4 S-adenosyl-L-homocysteine + 4 H(+). Functionally, specifically dimethylates two adjacent adenosines (A1518 and A1519) in the loop of a conserved hairpin near the 3'-end of 16S rRNA in the 30S particle. May play a critical role in biogenesis of 30S subunits. The chain is Ribosomal RNA small subunit methyltransferase A from Neisseria meningitidis serogroup B (strain ATCC BAA-335 / MC58).